The following is a 695-amino-acid chain: Follicle-stimulating hormone receptor (695 aa).

The N-terminal stretch at 1-17 (MALLLVALLAFLSLGSG) is a signal peptide. Disulfide bonds link C18/C25 and C23/C32. In terms of domain architecture, LRRNT spans 18 to 46 (CHHRLCHCSNGVFLCQESKVTEIPSDLPR). Over 18 to 366 (CHHRLCHCSN…EDIMGDDILR (349 aa)) the chain is Extracellular. LRR repeat units lie at residues 49–72 (VELR…FGDL), 73–97 (EKIE…LPKL), 98–118 (HEIR…AFQN), 119–143 (LPNL…KIQS), 144–169 (LQKV…MGLS), 170–192 (FESM…AFNG), 193–216 (TQLD…VFQG), 217–240 (ASGP…GLEN), and 241–259 (LKKL…PSLE). 2 N-linked (GlcNAc...) asparagine glycosylation sites follow: N191 and N199. 4 disulfides stabilise this stretch: C275–C346, C276–C292, C276–C356, and C292–C338. N-linked (GlcNAc...) asparagine glycosylation occurs at N293. A Sulfotyrosine modification is found at Y335. A helical transmembrane segment spans residues 367–387 (VLIWFISILAITGNILVLVIL). Residues 388–398 (ITSQYKLTVPR) are Cytoplasmic-facing. A helical membrane pass occupies residues 399 to 421 (FLMCNLAFADLCIGIYLLLIASV). The Extracellular portion of the chain corresponds to 422–443 (DVHTKTEYHNYAIDWQTGAGCD). Cysteines 442 and 517 form a disulfide. A helical transmembrane segment spans residues 444–465 (AAGFFTVFASELSVYTLTAITL). Topologically, residues 466–485 (ERWHTITHAMQLECKVQLRH) are cytoplasmic. Residues 486 to 508 (AASIMLVGWIFAFAVALFPIFGI) traverse the membrane as a helical segment. The Extracellular portion of the chain corresponds to 509 to 528 (SSYMKVSICLPMDIDSPLSQ). The chain crosses the membrane as a helical span at residues 529–550 (LYVMSLLVLNVLAFVVICGCYT). Topologically, residues 551–573 (HIYLTVRNPNITSSSSDTKIAKR) are cytoplasmic. A helical membrane pass occupies residues 574–597 (MAMLIFTDFLCMAPISFFAISASL). At 598-608 (KVPLITVSKSK) the chain is on the extracellular side. Residues 609–630 (ILLVLFYPINSCANPFLYAIFT) traverse the membrane as a helical segment. Topologically, residues 631–695 (KNFRRDFFIL…LIPLRHLAKN (65 aa)) are cytoplasmic.

Belongs to the G-protein coupled receptor 1 family. FSH/LSH/TSH subfamily. In terms of assembly, homotrimer. Functions as a homotrimer binding the FSH hormone heterodimer composed of CGA and FSHB. Interacts with ARRB2. Interacts with APPL2; interaction is independent of follicle stimulating hormone stimulation. N-glycosylated; indirectly required for FSH-binding, possibly via a conformational change that allows high affinity binding of hormone. In terms of processing, sulfated.

It is found in the cell membrane. Functionally, g protein-coupled receptor for follitropin, the follicle-stimulating hormone. Through cAMP production activates the downstream PI3K-AKT and ERK1/ERK2 signaling pathways. This chain is Follicle-stimulating hormone receptor (FSHR), found in Bos taurus (Bovine).